The chain runs to 275 residues: Serine/threonine-protein phosphatase PGAM5, mitochondrial (275 aa).

The chain crosses the membrane as a helical span at residues 7-24; the sequence is LIAGGSAAAAILGVVAAG.

This sequence belongs to the phosphoglycerate mutase family. BPG-dependent PGAM subfamily. Phosphorylated by the RIPK1/RIPK3 complex under necrotic conditions. This phosphorylation increases PGAM5 phosphatase activity.

It is found in the mitochondrion outer membrane. The enzyme catalyses O-phospho-L-seryl-[protein] + H2O = L-seryl-[protein] + phosphate. It carries out the reaction O-phospho-L-threonyl-[protein] + H2O = L-threonyl-[protein] + phosphate. Functionally, displays phosphatase activity for serine/threonine residues. Has apparently no phosphoglycerate mutase activity. May be regulator of mitochondrial dynamics. May be a central mediator for programmed necrosis. This chain is Serine/threonine-protein phosphatase PGAM5, mitochondrial (pgam5), found in Xenopus laevis (African clawed frog).